We begin with the raw amino-acid sequence, 1030 residues long: Beta-galactosidase (1030 aa).

Asparagine 99 and aspartate 197 together coordinate substrate. Aspartate 197 lines the Na(+) pocket. Mg(2+) is bound by residues glutamate 411, histidine 413, and glutamate 456. Substrate-binding positions include glutamate 456 and 532–535 (EYAH). Glutamate 456 functions as the Proton donor in the catalytic mechanism. Glutamate 532 (nucleophile) is an active-site residue. Residue asparagine 592 participates in Mg(2+) binding. Residues phenylalanine 596 and asparagine 599 each coordinate Na(+). Substrate is bound by residues asparagine 599 and tryptophan 1004.

This sequence belongs to the glycosyl hydrolase 2 family. Homotetramer. Requires Mg(2+) as cofactor. The cofactor is Na(+).

It catalyses the reaction Hydrolysis of terminal non-reducing beta-D-galactose residues in beta-D-galactosides.. In Photobacterium profundum (strain SS9), this protein is Beta-galactosidase.